Here is a 129-residue protein sequence, read N- to C-terminus: Small ribosomal subunit protein uS11 (129 aa).

This sequence belongs to the universal ribosomal protein uS11 family. As to quaternary structure, part of the 30S ribosomal subunit. Interacts with proteins S7 and S18. Binds to IF-3.

Functionally, located on the platform of the 30S subunit, it bridges several disparate RNA helices of the 16S rRNA. Forms part of the Shine-Dalgarno cleft in the 70S ribosome. This Staphylococcus epidermidis (strain ATCC 12228 / FDA PCI 1200) protein is Small ribosomal subunit protein uS11.